Reading from the N-terminus, the 380-residue chain is Flap endonuclease 1 (380 aa).

The interval 1–105 (MGIKGLAQVL…GELAKRVARH (105 aa)) is N-domain. D34 contributes to the Mg(2+) binding site. Residues R47 and R71 each coordinate DNA. Residues D87, E159, E161, D180, and D182 each contribute to the Mg(2+) site. Residues 123–254 (MVDRFAKRTV…ARAVELIRQY (132 aa)) form an I-domain region. Residue E159 coordinates DNA. DNA-binding residues include G232 and D234. A Mg(2+)-binding site is contributed by D234. Residues 337-345 (PQGRLDSFF) form an interaction with PCNA region. The tract at residues 340-380 (RLDSFFKPVPSSPKKPVDTKSKGSAKRKRDSNKGGESKKKR) is disordered. A compositionally biased stretch (low complexity) spans 342–353 (DSFFKPVPSSPK). A phosphoserine mark is found at S350 and S351. Residues 370–380 (SNKGGESKKKR) show a composition bias toward basic and acidic residues.

This sequence belongs to the XPG/RAD2 endonuclease family. FEN1 subfamily. In terms of assembly, interacts with PCNA. Three molecules of rad2 bind to one PCNA trimer with each molecule binding to one PCNA monomer. PCNA stimulates the nuclease activity without altering cleavage specificity. Mg(2+) is required as a cofactor. In terms of processing, phosphorylated. Phosphorylation upon DNA damage induces relocalization to the nuclear plasma.

The protein localises to the nucleus. It is found in the nucleolus. It localises to the nucleoplasm. The protein resides in the mitochondrion. Structure-specific nuclease with 5'-flap endonuclease and 5'-3' exonuclease activities involved in DNA replication and repair. During DNA replication, cleaves the 5'-overhanging flap structure that is generated by displacement synthesis when DNA polymerase encounters the 5'-end of a downstream Okazaki fragment. It enters the flap from the 5'-end and then tracks to cleave the flap base, leaving a nick for ligation. Also involved in the long patch base excision repair (LP-BER) pathway, by cleaving within the apurinic/apyrimidinic (AP) site-terminated flap. Acts as a genome stabilization factor that prevents flaps from equilibrating into structures that lead to duplications and deletions. Also possesses 5'-3' exonuclease activity on nicked or gapped double-stranded DNA, and exhibits RNase H activity. Also involved in replication and repair of rDNA and in repairing mitochondrial DNA. This is Flap endonuclease 1 from Schizosaccharomyces pombe (strain 972 / ATCC 24843) (Fission yeast).